The primary structure comprises 932 residues: Probable UDP-N-acetylglucosamine--peptide N-acetylglucosaminyltransferase SPINDLY (932 aa).

A compositionally biased stretch (basic and acidic residues) spans 1–15; sequence MAWTEKDVENGKESD. Residues 1–39 form a disordered region; it reads MAWTEKDVENGKESDSLGNNGFLKGVQSSSDSKGSPVRI. 11 TPR repeats span residues 48–81, 82–115, 116–149, 157–190, 191–224, 225–258, 266–299, 300–333, 334–367, 369–401, and 402–435; these read GKDAITYANILRSRNKFVDALAIYESVLQKDSGS, IESLIGKGICLQMQNMGRLAFESFAEAIKLDPQN, ACALTHCGILYKDEGRLVEAAESYQKALKADPSY, AIVLTDIGTSLKLAGNSQEGIQKYYEAIKIDSHY, APAYYNLGVVYSEMMQYDMALNCYEKAAIERPMY, AEAYCNMGVIYKNRGDLESAIACYERCLAVSPNF, AIALTDLGTKVKLEGDINQGVAYYKKALYYNWHY, ADAMYNLGVAYGEMLKFDMAIVFYELAFHFNPHC, AEACNNLGVIYKDRDNLDKAVECYQMALTIKPNF, QSLNNLGVVYTVQGKMDAAASMIEKAIIANPTY, and AEAYNNLGVLYRDAGNISLAIEAYEQCLKIDPDS. The segment at 436–932 is catalytic region; sequence RNAGQNRLLA…NQAGNPGKQS (497 aa). The interval 881-902 is disordered; that stretch reads VSPIEKTRISASKDGPIKENGF.

It belongs to the glycosyltransferase 41 family. O-GlcNAc transferase subfamily. In terms of tissue distribution, expressed in stems, leaves and flowers. Expressed during all stages of corolla maturation.

It localises to the nucleus. It catalyses the reaction L-seryl-[protein] + UDP-N-acetyl-alpha-D-glucosamine = 3-O-(N-acetyl-beta-D-glucosaminyl)-L-seryl-[protein] + UDP + H(+). The catalysed reaction is L-threonyl-[protein] + UDP-N-acetyl-alpha-D-glucosamine = 3-O-(N-acetyl-beta-D-glucosaminyl)-L-threonyl-[protein] + UDP + H(+). It participates in protein modification; protein glycosylation. Probable O-linked N-acetylglucosamine transferase (OGT) involved in various processes such as gibberellin (GA) signaling pathway. OGTs catalyze the addition of nucleotide-activated sugars directly onto the polypeptide through O-glycosidic linkage with the hydroxyl of serine or threonine. Probably acts by adding O-linked sugars to yet unknown proteins. The sequence is that of Probable UDP-N-acetylglucosamine--peptide N-acetylglucosaminyltransferase SPINDLY (SPY) from Petunia hybrida (Petunia).